We begin with the raw amino-acid sequence, 264 residues long: Undecaprenyl-diphosphatase (264 aa).

8 helical membrane passes run 1-21 (MDIVHIIVLSLVQGITEFLPI), 39-59 (QGLAFDVAVHIGTLTAIVFYF), 83-103 (STLVWAVCFATIPAGIFGLAF), 113-133 (SGIVIAVTTIIFGVVLYLADK), 143-163 (VTIKLALIIGLAQALALIPGV), 181-201 (VGSANFSFLMSIPIILLAGGL), 220-240 (LAALISAVSAYICVKLFMSII), and 244-264 (SMTPFVVYRLILGVFLLFIFV).

It belongs to the UppP family.

It localises to the cell inner membrane. The catalysed reaction is di-trans,octa-cis-undecaprenyl diphosphate + H2O = di-trans,octa-cis-undecaprenyl phosphate + phosphate + H(+). Functionally, catalyzes the dephosphorylation of undecaprenyl diphosphate (UPP). Confers resistance to bacitracin. The sequence is that of Undecaprenyl-diphosphatase from Campylobacter curvus (strain 525.92).